A 401-amino-acid chain; its full sequence is Haptoglobin (401 aa).

A signal peptide spans 1 to 18; sequence MSALQAVVTLLLCGQLLA. Sushi domains lie at 28–83 and 85–142; these read DSCP…ECEE and DSCP…ECEA. Intrachain disulfides connect Cys49-Cys81, Cys106-Cys140, and Cys144-Cys261. The region spanning 157 to 399 is the Peptidase S1 domain; it reads IIGGSLDAKG…ILDWVRKTIA (243 aa). N-linked (GlcNAc...) asparagine glycans are attached at residues Asn286 and Asn316. Intrachain disulfides connect Cys304-Cys335 and Cys346-Cys376. The segment at 313–318 is interaction with CD163; sequence APKNKT.

The protein belongs to the peptidase S1 family. Tetramer of two alpha and two beta chains; disulfide-linked. The hemoglobin/haptoglobin complex is composed of a haptoglobin dimer bound to two hemoglobin alpha-beta dimers. Interacts with CD163. Interacts with ERGIC3. Expressed by the liver and secreted in plasma.

It is found in the secreted. Its subcellular location is the extracellular space. In terms of biological role, as a result of hemolysis, hemoglobin is found to accumulate in the kidney and is secreted in the urine. Haptoglobin captures, and combines with free plasma hemoglobin to allow hepatic recycling of heme iron and to prevent kidney damage. Haptoglobin also acts as an antioxidant, has antibacterial activity and plays a role in modulating many aspects of the acute phase response. Hemoglobin/haptoglobin complexes are rapidly cleared by the macrophage CD163 scavenger receptor expressed on the surface of liver Kupfer cells through an endocytic lysosomal degradation pathway. The chain is Haptoglobin (HP) from Bos taurus (Bovine).